We begin with the raw amino-acid sequence, 151 residues long: Ribonuclease H (151 aa).

The 141-residue stretch at 1–141 (MKHVDIFTDG…ADELARKGME (141 aa)) folds into the RNase H type-1 domain. The Mg(2+) site is built by D9, E47, D69, and D133.

Belongs to the RNase H family. Monomer. Mg(2+) is required as a cofactor.

The protein localises to the cytoplasm. It catalyses the reaction Endonucleolytic cleavage to 5'-phosphomonoester.. In terms of biological role, endonuclease that specifically degrades the RNA of RNA-DNA hybrids. The chain is Ribonuclease H from Rhizobium johnstonii (strain DSM 114642 / LMG 32736 / 3841) (Rhizobium leguminosarum bv. viciae).